We begin with the raw amino-acid sequence, 278 residues long: Tryptophan synthase alpha chain (278 aa).

Active-site proton acceptor residues include glutamate 49 and aspartate 60.

Belongs to the TrpA family. Tetramer of two alpha and two beta chains.

It carries out the reaction (1S,2R)-1-C-(indol-3-yl)glycerol 3-phosphate + L-serine = D-glyceraldehyde 3-phosphate + L-tryptophan + H2O. Its pathway is amino-acid biosynthesis; L-tryptophan biosynthesis; L-tryptophan from chorismate: step 5/5. Its function is as follows. The alpha subunit is responsible for the aldol cleavage of indoleglycerol phosphate to indole and glyceraldehyde 3-phosphate. This Granulibacter bethesdensis (strain ATCC BAA-1260 / CGDNIH1) protein is Tryptophan synthase alpha chain.